The primary structure comprises 171 residues: Adenine phosphoribosyltransferase (171 aa).

The protein belongs to the purine/pyrimidine phosphoribosyltransferase family. In terms of assembly, homodimer.

The protein localises to the cytoplasm. The enzyme catalyses AMP + diphosphate = 5-phospho-alpha-D-ribose 1-diphosphate + adenine. It participates in purine metabolism; AMP biosynthesis via salvage pathway; AMP from adenine: step 1/1. In terms of biological role, catalyzes a salvage reaction resulting in the formation of AMP, that is energically less costly than de novo synthesis. In Natranaerobius thermophilus (strain ATCC BAA-1301 / DSM 18059 / JW/NM-WN-LF), this protein is Adenine phosphoribosyltransferase.